A 954-amino-acid chain; its full sequence is Glycine dehydrogenase (decarboxylating) (954 aa).

K706 is subject to N6-(pyridoxal phosphate)lysine.

This sequence belongs to the GcvP family. In terms of assembly, the glycine cleavage system is composed of four proteins: P, T, L and H. Requires pyridoxal 5'-phosphate as cofactor.

It catalyses the reaction N(6)-[(R)-lipoyl]-L-lysyl-[glycine-cleavage complex H protein] + glycine + H(+) = N(6)-[(R)-S(8)-aminomethyldihydrolipoyl]-L-lysyl-[glycine-cleavage complex H protein] + CO2. In terms of biological role, the glycine cleavage system catalyzes the degradation of glycine. The P protein binds the alpha-amino group of glycine through its pyridoxal phosphate cofactor; CO(2) is released and the remaining methylamine moiety is then transferred to the lipoamide cofactor of the H protein. The chain is Glycine dehydrogenase (decarboxylating) from Pseudomonas savastanoi pv. phaseolicola (strain 1448A / Race 6) (Pseudomonas syringae pv. phaseolicola (strain 1448A / Race 6)).